Here is a 96-residue protein sequence, read N- to C-terminus: Muconolactone Delta-isomerase (96 aa).

It belongs to the muconolactone Delta-isomerase family. As to quaternary structure, homodecamer.

The catalysed reaction is (S)-muconolactone = (4,5-dihydro-5-oxofuran-2-yl)-acetate. It participates in aromatic compound metabolism; beta-ketoadipate pathway; 5-oxo-4,5-dihydro-2-furylacetate from catechol: step 3/3. The protein is Muconolactone Delta-isomerase (catC) of Pseudomonas aeruginosa (strain ATCC 15692 / DSM 22644 / CIP 104116 / JCM 14847 / LMG 12228 / 1C / PRS 101 / PAO1).